Consider the following 121-residue polypeptide: Large ribosomal subunit protein uL24 (121 aa).

The segment at 1 to 30 (MVRIVSKQPRKQRKARYNAPNHTRGRFLSA) is disordered.

The protein belongs to the universal ribosomal protein uL24 family. Part of the 50S ribosomal subunit.

One of two assembly initiator proteins, it binds directly to the 5'-end of the 23S rRNA, where it nucleates assembly of the 50S subunit. Functionally, located at the polypeptide exit tunnel on the outside of the subunit. The chain is Large ribosomal subunit protein uL24 from Methanoculleus marisnigri (strain ATCC 35101 / DSM 1498 / JR1).